The primary structure comprises 276 residues: Ribosomal RNA large subunit methyltransferase E (276 aa).

S-adenosyl-L-methionine-binding residues include glycine 52, phenylalanine 54, aspartate 72, aspartate 90, and aspartate 114. Catalysis depends on lysine 154, which acts as the Proton acceptor. Positions 203–249 are enriched in low complexity; the sequence is RAAPTANATPTPTSTSTSTPTSTSTPTSTSTSTPAPTLTQTQTQTPK. The interval 203 to 276 is disordered; the sequence is RAAPTANATP…AKTGASRRTR (74 aa). Over residues 265 to 276 the composition is skewed to basic residues; it reads AKAKTGASRRTR.

It belongs to the class I-like SAM-binding methyltransferase superfamily. RNA methyltransferase RlmE family.

It is found in the cytoplasm. It catalyses the reaction uridine(2552) in 23S rRNA + S-adenosyl-L-methionine = 2'-O-methyluridine(2552) in 23S rRNA + S-adenosyl-L-homocysteine + H(+). Specifically methylates the uridine in position 2552 of 23S rRNA at the 2'-O position of the ribose in the fully assembled 50S ribosomal subunit. The sequence is that of Ribosomal RNA large subunit methyltransferase E from Anaeromyxobacter sp. (strain Fw109-5).